Consider the following 213-residue polypeptide: LexA repressor (213 aa).

The H-T-H motif DNA-binding region spans 31-51 (RAEISRELGFRSPNAAEEYLK). Catalysis depends on for autocatalytic cleavage activity residues Ser-129 and Lys-166.

The protein belongs to the peptidase S24 family. In terms of assembly, homodimer.

It carries out the reaction Hydrolysis of Ala-|-Gly bond in repressor LexA.. Represses a number of genes involved in the response to DNA damage (SOS response), including recA and lexA. In the presence of single-stranded DNA, RecA interacts with LexA causing an autocatalytic cleavage which disrupts the DNA-binding part of LexA, leading to derepression of the SOS regulon and eventually DNA repair. The chain is LexA repressor from Mannheimia succiniciproducens (strain KCTC 0769BP / MBEL55E).